The primary structure comprises 957 residues: Glycine dehydrogenase (decarboxylating) (957 aa).

At lysine 708 the chain carries N6-(pyridoxal phosphate)lysine.

This sequence belongs to the GcvP family. In terms of assembly, the glycine cleavage system is composed of four proteins: P, T, L and H. It depends on pyridoxal 5'-phosphate as a cofactor.

The catalysed reaction is N(6)-[(R)-lipoyl]-L-lysyl-[glycine-cleavage complex H protein] + glycine + H(+) = N(6)-[(R)-S(8)-aminomethyldihydrolipoyl]-L-lysyl-[glycine-cleavage complex H protein] + CO2. Functionally, the glycine cleavage system catalyzes the degradation of glycine. The P protein binds the alpha-amino group of glycine through its pyridoxal phosphate cofactor; CO(2) is released and the remaining methylamine moiety is then transferred to the lipoamide cofactor of the H protein. In Shigella flexneri, this protein is Glycine dehydrogenase (decarboxylating).